The chain runs to 197 residues: Imidazoleglycerol-phosphate dehydratase (197 aa).

Belongs to the imidazoleglycerol-phosphate dehydratase family.

The protein localises to the cytoplasm. It catalyses the reaction D-erythro-1-(imidazol-4-yl)glycerol 3-phosphate = 3-(imidazol-4-yl)-2-oxopropyl phosphate + H2O. It participates in amino-acid biosynthesis; L-histidine biosynthesis; L-histidine from 5-phospho-alpha-D-ribose 1-diphosphate: step 6/9. The protein is Imidazoleglycerol-phosphate dehydratase of Thioalkalivibrio sulfidiphilus (strain HL-EbGR7).